The sequence spans 840 residues: Intracellular phospholipase A1 (840 aa).

Disordered stretches follow at residues Met1–Lys142 and Lys666–Ala718. Basic and acidic residues predominate over residues Gly26–Met39. Residues Ser97–Ser111 show a composition bias toward low complexity. The DDHD domain occupies Leu564–Cys827. The segment covering Asn668–Gly680 has biased composition (basic and acidic residues). Over residues Asp681–Glu694 the composition is skewed to acidic residues.

This sequence belongs to the PA-PLA1 family.

It carries out the reaction 1,2-dihexadecanoyl-sn-glycero-3-phospho-(1D-myo-inositol) + H2O = 2-hexadecanoyl-sn-glycero-3-phospho-(1D-myo-inositol) + hexadecanoate + H(+). It catalyses the reaction a 1,2-diacyl-sn-glycero-3-phospho-L-serine + H2O = a 2-acyl-sn-glycero-3-phospho-L-serine + a fatty acid + H(+). The enzyme catalyses 1-hexadecanoyl-2-(9Z-octadecenoyl)-sn-glycero-3-phospho-L-serine + H2O = 2-(9Z-octadecenoyl)-sn-glycero-3-phospho-L-serine + hexadecanoate + H(+). The catalysed reaction is 1,2-di-(9Z-octadecenoyl)-sn-glycero-3-phosphocholine + H2O = (9Z-octadecenoyl)-sn-glycero-3-phosphocholine + (9Z)-octadecenoate + H(+). It carries out the reaction a 1,2-diacyl-sn-glycero-3-phosphocholine + H2O = a 1-acyl-sn-glycero-3-phosphocholine + a fatty acid + H(+). It catalyses the reaction 1,2-dihexadecanoyl-sn-glycero-3-phosphocholine + H2O = 1-hexadecanoyl-sn-glycero-3-phosphocholine + hexadecanoate + H(+). Inhibited by E-6-bromomethylene-3-1-naphthalenyl-2H-tetrahydropyran-2-one (BEL) in vitro. Functionally, hydrolyzes the ester bond at the sn-1 position of glycerophospholipids and produces 2-acyl lysophospholipids, being phosphatidylinositol (PI) its major substrate. PI is a versatile lipid that not only serves as a structural component of cellular membranes, but also plays important roles in signal transduction through distinct phosphorylated derivatives of the inositol head group. Catalyzes the hydrolysis of phosphatidylcholine at sn-2 position in vitro. Regulates asymmetric division, an important property of stem cells in C.elegans, by controlling the subcellular localizations of beta-catenin. The sequence is that of Intracellular phospholipase A1 from Caenorhabditis elegans.